We begin with the raw amino-acid sequence, 3027 residues long: DmX-like protein 1 (3027 aa).

WD repeat units follow at residues 108–145, 166–206, and 229–277; these read FLESIAHNITWDPTGSRLLTGSSYLQLWSNTNLEKPTE, KTAS…RTAV, and AHPR…NDCL. 4 positions are modified to phosphoserine: Ser324, Ser422, Ser425, and Ser436. Over residues 420–433 the composition is skewed to polar residues; it reads PSSEASVEDSNQAD. Residues 420–450 form a disordered region; that stretch reads PSSEASVEDSNQADVKSDEETDDGVDDLKIN. A WD 4 repeat occupies 476 to 516; sequence DHQIEVLLSEWSKNADMLFSIHPMDGSLLVWHVDWLDEYQP. Residues 563-584 are disordered; that stretch reads KQKPSGLTRSTSMLISSGHNKS. Ser574 bears the Phosphoserine mark. WD repeat units lie at residues 580–621, 628–665, and 848–895; these read GHNK…ESAF, SHKSRYCGHRFHLNDLACHSVLPLLLTTSHHNALRTPD, and GKDS…IPVS. A phosphoserine mark is found at Ser918 and Ser924. WD repeat units lie at residues 968 to 1010, 1134 to 1175, and 1211 to 1251; these read PSAG…GESA, SNTK…VQDQ, and GSPP…EPVI. A phosphoserine mark is found at Ser1830, Ser1896, Ser1908, and Ser1970. 2 disordered regions span residues 2367-2412 and 2446-2468; these read PSKE…SSAP and SRAEYDSEESLGSDDDDNDDDDD. Residues 2451 to 2468 show a composition bias toward acidic residues; the sequence is DSEESLGSDDDDNDDDDD. WD repeat units lie at residues 2742-2783, 2785-2824, 2836-2878, 2884-2923, 2926-2965, and 2978-3016; these read KAIN…TCFR, GGNSRVTRMRFNYQGNKFGIVDADGYLSLYQTNWKCCPVT, CHNK…ANSL, CHDSGATVLAYAPKHQLLISGGRKGFTYVFDLCQRQQRQL, SHDSPVKAVAVDPTEEYFVTGSAEGNIKIWSLSTFGLLHT, and NIGTGVMQIETGPANHIFSCGADGTMKMRILPDQFSPLN.

In terms of tissue distribution, expressed in bone, breast, eye, foreskin, heart, parathyroid, small intestine, testis, tonsils, placenta and uterus.

The chain is DmX-like protein 1 (DMXL1) from Homo sapiens (Human).